The chain runs to 497 residues: MASLLDRYLRNISDKSQQNLASVAYLASLDHLLHAFPSIGQSIVQELKSQRSRLKMIASENFSSLSVQLAMGNLLTDKYCEGSPFKRFYSCCENVDAIEWECAETAKELFGAESAFVQPHSGADANLLAIMSIITQKIQSPAVQQLGYKTINDLPEQEYEALKAEMAQHKCLGPSLNSGGHLTHGTVRMNIMSKLMHCLPYEVNLDTELFDYDEIAKIAKEHKPTVLIAGYSSYSRRFNFATLKQIAEDCGAVLWVDMAHFAGLVAGGVFVGEENPMPYADIVTTTTHKTLRGPRGGLVLAKKEYANTLNKACPLMMGGPLPHVIAAKAIALKEAMTINFRKYAHKVVENAQTLAEVFQRNGLRLLTGGTDNHMLIIDLTSLGVPGRIAEDMLTSVGIAVNRNTIPSDASGQWKTSGIRLGTPALTTLGMGSAEMEEVANIIVKVLRNITVRSNAESGSSKSEGELSEGIAQEARQRVADLLGRFPLYPEIDLETLV.

Residues leucine 176 and 180 to 182 (GHL) each bind (6S)-5,6,7,8-tetrahydrofolate. The residue at position 289 (lysine 289) is an N6-(pyridoxal phosphate)lysine.

This sequence belongs to the SHMT family. As to quaternary structure, homodimer. Pyridoxal 5'-phosphate serves as cofactor.

It localises to the cytoplasm. It catalyses the reaction (6R)-5,10-methylene-5,6,7,8-tetrahydrofolate + glycine + H2O = (6S)-5,6,7,8-tetrahydrofolate + L-serine. Its pathway is one-carbon metabolism; tetrahydrofolate interconversion. It participates in amino-acid biosynthesis; glycine biosynthesis; glycine from L-serine: step 1/1. Functionally, catalyzes the reversible interconversion of serine and glycine with tetrahydrofolate (THF) serving as the one-carbon carrier. This reaction serves as the major source of one-carbon groups required for the biosynthesis of purines, thymidylate, methionine, and other important biomolecules. Also exhibits THF-independent aldolase activity toward beta-hydroxyamino acids, producing glycine and aldehydes, via a retro-aldol mechanism. The sequence is that of Serine hydroxymethyltransferase from Chlamydia trachomatis serovar L2b (strain UCH-1/proctitis).